The following is a 198-amino-acid chain: Chorion protein S19 (198 aa).

The first 16 residues, 1–16, serve as a signal peptide directing secretion; sequence MNKFATLAVFISVCLA.

Belongs to the chorion protein S19 family.

It is found in the secreted. Functionally, chorion membrane (egg shell) protein; plays a role in protecting the egg from the environment. The polypeptide is Chorion protein S19 (Cp19) (Drosophila virilis (Fruit fly)).